Reading from the N-terminus, the 347-residue chain is Leucine-rich repeat-containing protein 69 (347 aa).

LRR repeat units follow at residues glycine 38–threonine 60, glutamine 61–leucine 82, serine 84–glycine 105, asparagine 108–leucine 129, serine 131–glutamate 153, asparagine 154–leucine 175, lysine 177–lysine 199, and lysine 200–lysine 222.

It belongs to the LRRC69 family.

In Homo sapiens (Human), this protein is Leucine-rich repeat-containing protein 69 (LRRC69).